The following is a 301-amino-acid chain: Ribosomal protein L11 methyltransferase (301 aa).

Residues T152, G173, D195, and N236 each coordinate S-adenosyl-L-methionine.

This sequence belongs to the methyltransferase superfamily. PrmA family.

The protein resides in the cytoplasm. It carries out the reaction L-lysyl-[protein] + 3 S-adenosyl-L-methionine = N(6),N(6),N(6)-trimethyl-L-lysyl-[protein] + 3 S-adenosyl-L-homocysteine + 3 H(+). Functionally, methylates ribosomal protein L11. The chain is Ribosomal protein L11 methyltransferase from Dictyoglomus thermophilum (strain ATCC 35947 / DSM 3960 / H-6-12).